The following is a 424-amino-acid chain: Homoserine O-succinyltransferase (424 aa).

The 315-residue stretch at N67–D381 folds into the AB hydrolase-1 domain. Residue S173 is the Nucleophile of the active site. R243 is a substrate binding site. Residues D342 and H375 contribute to the active site. D376 lines the substrate pocket.

Belongs to the AB hydrolase superfamily. MetX family. In terms of assembly, homodimer.

The protein localises to the cytoplasm. It carries out the reaction L-homoserine + succinyl-CoA = O-succinyl-L-homoserine + CoA. It participates in amino-acid biosynthesis; L-methionine biosynthesis via de novo pathway; O-succinyl-L-homoserine from L-homoserine: step 1/1. Functionally, transfers a succinyl group from succinyl-CoA to L-homoserine, forming succinyl-L-homoserine. In vitro, also has serine succinyl transferase activity. The polypeptide is Homoserine O-succinyltransferase (Bordetella petrii (strain ATCC BAA-461 / DSM 12804 / CCUG 43448)).